A 408-amino-acid polypeptide reads, in one-letter code: Probable ethanolamine permease EutH (408 aa).

11 helical membrane-spanning segments follow: residues 1 to 21, 61 to 81, 89 to 109, 126 to 146, 155 to 175, 192 to 212, 230 to 250, 274 to 294, 313 to 333, 342 to 362, and 369 to 389; these read MGIN…AAVD, AMVG…PVII, ANPS…FFLA, ILGS…LGII, ALGV…GGLI, FALI…VALG, FLVA…LLGW, IEVI…VLLL, NIAA…FGMM, VINC…LGFA, and MIFP…GVAM.

It belongs to the EutH family.

The protein resides in the cell inner membrane. It carries out the reaction ethanolamine(in) = ethanolamine(out). Its pathway is amine and polyamine degradation; ethanolamine degradation. Its function is as follows. Probably involved in the diffusion of protonated ethanolamine (EA) into the cell at low pH. At low pH most EA is protonated, and this permease becomes necessary. Contributes to bacterial survival and replication in acidified macrophage vacuoles, but not to bacterial uptake by macrophages. In terms of biological role, expression of the eut operon allows this bacteria to use ethanolamine (EA) as a carbon, nitrogen and energy source. It relies on cobalamin (vitamin B12) both as a cofactor for the ethanolamine ammonia-lyase (EAL) activity and to induce the operon. EA enhances bacterial survival in macrophages in a concentration-dependent manner, suggesting it is an important nutrient during infection. The polypeptide is Probable ethanolamine permease EutH (Salmonella typhimurium (strain LT2 / SGSC1412 / ATCC 700720)).